A 400-amino-acid chain; its full sequence is Mitogen-activated protein kinase hog1 (400 aa).

In terms of domain architecture, Protein kinase spans 20-299 (YVDLNPVGMG…AADALAHPYL (280 aa)). Residues 26-34 (VGMGAFGLV) and Lys-49 contribute to the ATP site. Asp-141 serves as the catalytic Proton acceptor. Position 171 is a phosphothreonine (Thr-171). Positions 171-173 (TGY) match the TXY motif. Tyr-173 is modified (phosphotyrosine). Residues 345–400 (SSAVEQQQQQPQPPQPQLQQQQQPPQQPQQPQQPQXAQQPVQPVQGDYVPQVAPRS) are disordered. Over residues 361–389 (QLQQQQQPPQQPQQPQQPQXAQQPVQPVQ) the composition is skewed to low complexity.

Belongs to the protein kinase superfamily. Ser/Thr protein kinase family. MAP kinase subfamily. HOG1 sub-subfamily. Mg(2+) serves as cofactor. Dually phosphorylated on Thr-171 and Tyr-173, which activates the enzyme. Phosphorylation is induced by osmotic stress.

The protein resides in the cytoplasm. Its subcellular location is the nucleus. The enzyme catalyses L-seryl-[protein] + ATP = O-phospho-L-seryl-[protein] + ADP + H(+). The catalysed reaction is L-threonyl-[protein] + ATP = O-phospho-L-threonyl-[protein] + ADP + H(+). Its activity is regulated as follows. Activated by tyrosine and threonine phosphorylation. Proline-directed serine/threonine-protein kinase involved in a signal transduction pathway that is activated by changes in the osmolarity of the extracellular environment. Controls osmotic regulation of transcription of target genes. This chain is Mitogen-activated protein kinase hog1 (hog1), found in Blastobotrys adeninivorans (Yeast).